Here is a 119-residue protein sequence, read N- to C-terminus: Large ribosomal subunit protein bL20 (119 aa).

The protein belongs to the bacterial ribosomal protein bL20 family.

Its function is as follows. Binds directly to 23S ribosomal RNA and is necessary for the in vitro assembly process of the 50S ribosomal subunit. It is not involved in the protein synthesizing functions of that subunit. The sequence is that of Large ribosomal subunit protein bL20 from Gloeobacter violaceus (strain ATCC 29082 / PCC 7421).